Reading from the N-terminus, the 472-residue chain is H(+)/Cl(-) exchange transporter ClcA (472 aa).

The Cytoplasmic portion of the chain corresponds to 1–32 (MKAETPSFEAHQFVRVRRGDAVRRLIQRDKTP). The helical transmembrane segment at 33 to 69 (LAVLLMAAVVGTLAGLVGVAFEKSVNWVQNQRIGALA) threads the bilayer. The Periplasmic portion of the chain corresponds to 70 to 76 (QVADHWY). A helical transmembrane segment spans residues 77 to 100 (LVWPLAFILSALLAMVGYFLVRRF). A Selectivity filter part_1 motif is present at residues 106–110 (GSGIP). Serine 107 contributes to the chloride binding site. An intramembrane region (helical) is located at residues 109-116 (IPEIEGAL). Residues 117 to 123 (EELRPVR) are Cytoplasmic-facing. Transmembrane regions (helical) follow at residues 124-141 (WWRVLPVKFIGGMGTLGA) and 148-166 (EGPMVQLGGNIGRMVLDIF). The short motif at 146–150 (GREGP) is the Selectivity filter part_2 element. The Cytoplasmic portion of the chain corresponds to 167–176 (RMRSPEARHT). Intramembrane regions (helical) lie at residues 177-189 (LLATGAASGLSAA) and 193-201 (PLAGILFII). The Cytoplasmic segment spans residues 202–214 (EEMRPQFRYNLIS). Residues 215–232 (IKAVFTGVIMSSIVFRIF) form a helical membrane-spanning segment. At 233–252 (NGEAAIIEVGKLSNAPVNTL) the chain is on the periplasmic side. A helical transmembrane segment spans residues 253-281 (WLYLVLGMLFGCFGPLFNFLVLRTQDIFQ). At 282–287 (RIHGGN) the chain is on the cytoplasmic side. Residues 288 to 309 (IKTWVLMGGVIGGICGLLGLMQ) form a helical membrane-spanning segment. The Periplasmic portion of the chain corresponds to 310–329 (PSAVGGGFNLIPIAAAGNFS). 2 helical membrane-spanning segments follow: residues 330 to 349 (VGLLLFIFIARVVTTLICFS) and 355 to 376 (GIFAPMLALGTLLGTAFGMAAI). Positions 355–359 (GIFAP) match the Selectivity filter part_3 motif. Isoleucine 356 and phenylalanine 357 together coordinate chloride. The Periplasmic segment spans residues 377–386 (PLFPAYHLDA). Positions 387-401 (GTFAIAGMGALLAAS) form an intramembrane region, helical. An intramembrane region (note=Loop between two helices) is located at residues 402 to 404 (VRA). The segment at residues 405-416 (PLTGIVLVLEMT) is an intramembrane region (helical). An intramembrane region (note=Loop between two helices) is located at residues 417-421 (DNYQL). A helical membrane pass occupies residues 422–438 (ILPMIITCLGATLLAQF). Topologically, residues 439-472 (LGGKPLYSTILQRTLAKQEAEQAAKAQQAPRENT) are cytoplasmic. Chloride is bound at residue tyrosine 445.

The protein belongs to the chloride channel (TC 2.A.49) family. ClcA subfamily. Homodimer.

Its subcellular location is the cell inner membrane. The enzyme catalyses 2 chloride(in) + H(+)(out) = 2 chloride(out) + H(+)(in). In terms of biological role, proton-coupled chloride transporter. Functions as antiport system and exchanges two chloride ions for 1 proton. Probably acts as an electrical shunt for an outwardly-directed proton pump that is linked to amino acid decarboxylation, as part of the extreme acid resistance (XAR) response. This chain is H(+)/Cl(-) exchange transporter ClcA, found in Klebsiella pneumoniae (strain 342).